Reading from the N-terminus, the 536-residue chain is Protein GvpD1 (536 aa).

39–46 (GAPGTGKT) lines the ATP pocket. Residues 352 to 413 (GPSDSADRYD…SDQPHPIDED (62 aa)) are disordered. The span at 363-372 (PDSTESFSEM) shows a compositional bias: polar residues. Residues 373–385 (ATTTPPDDAPTAT) show a composition bias toward low complexity. The span at 386 to 396 (HETDGADDGSR) shows a compositional bias: basic and acidic residues.

Belongs to the gas vesicle GvpD family. As to quaternary structure, interacts with GvpE.

It is found in the cytoplasm. Its function is as follows. Causes a decrease in the amount of GvpE protein. The 5'-region of its promoter or mRNA has a repressive function on downstream genes. Gas vesicles are hollow, gas filled proteinaceous nanostructures found in several microbial planktonic microorganisms. They allow positioning of halobacteria at the optimal depth for growth in the poorly aerated, shallow brine pools of their habitat. In terms of biological role, expression of a 9.5 kb p-vac DNA fragment containing 2 divergently transcribed regions (gvpD-gvpE-gvpF-gvpG-gvpH-gvpI-gvpJ-gvpK-gvpL-gvpM and gvpA-gvpC-gvpN-gvpO) allows H.volcanii to produce gas vesicles. A similar region restores gas vesicle production in H.halobium without the p-vac locus, but it still has the c-vac locus. In Halobacterium salinarum (strain ATCC 700922 / JCM 11081 / NRC-1) (Halobacterium halobium), this protein is Protein GvpD1 (gvpD11).